The primary structure comprises 182 residues: Crossover junction endodeoxyribonuclease RuvC (182 aa).

Catalysis depends on residues D7, E68, and D141. 3 residues coordinate Mg(2+): D7, E68, and D141.

This sequence belongs to the RuvC family. As to quaternary structure, homodimer which binds Holliday junction (HJ) DNA. The HJ becomes 2-fold symmetrical on binding to RuvC with unstacked arms; it has a different conformation from HJ DNA in complex with RuvA. In the full resolvosome a probable DNA-RuvA(4)-RuvB(12)-RuvC(2) complex forms which resolves the HJ. Mg(2+) serves as cofactor.

It localises to the cytoplasm. The catalysed reaction is Endonucleolytic cleavage at a junction such as a reciprocal single-stranded crossover between two homologous DNA duplexes (Holliday junction).. In terms of biological role, the RuvA-RuvB-RuvC complex processes Holliday junction (HJ) DNA during genetic recombination and DNA repair. Endonuclease that resolves HJ intermediates. Cleaves cruciform DNA by making single-stranded nicks across the HJ at symmetrical positions within the homologous arms, yielding a 5'-phosphate and a 3'-hydroxyl group; requires a central core of homology in the junction. The consensus cleavage sequence is 5'-(A/T)TT(C/G)-3'. Cleavage occurs on the 3'-side of the TT dinucleotide at the point of strand exchange. HJ branch migration catalyzed by RuvA-RuvB allows RuvC to scan DNA until it finds its consensus sequence, where it cleaves and resolves the cruciform DNA. The protein is Crossover junction endodeoxyribonuclease RuvC of Thermobifida fusca (strain YX).